We begin with the raw amino-acid sequence, 350 residues long: S-adenosylmethionine:tRNA ribosyltransferase-isomerase (350 aa).

The protein belongs to the QueA family. As to quaternary structure, monomer.

Its subcellular location is the cytoplasm. It catalyses the reaction 7-aminomethyl-7-carbaguanosine(34) in tRNA + S-adenosyl-L-methionine = epoxyqueuosine(34) in tRNA + adenine + L-methionine + 2 H(+). Its pathway is tRNA modification; tRNA-queuosine biosynthesis. In terms of biological role, transfers and isomerizes the ribose moiety from AdoMet to the 7-aminomethyl group of 7-deazaguanine (preQ1-tRNA) to give epoxyqueuosine (oQ-tRNA). The polypeptide is S-adenosylmethionine:tRNA ribosyltransferase-isomerase (Vibrio vulnificus (strain YJ016)).